We begin with the raw amino-acid sequence, 145 residues long: D-aminoacyl-tRNA deacylase (145 aa).

The Gly-cisPro motif, important for rejection of L-amino acids signature appears at 137-138 (GP).

The protein belongs to the DTD family. As to quaternary structure, homodimer.

It is found in the cytoplasm. The enzyme catalyses glycyl-tRNA(Ala) + H2O = tRNA(Ala) + glycine + H(+). The catalysed reaction is a D-aminoacyl-tRNA + H2O = a tRNA + a D-alpha-amino acid + H(+). An aminoacyl-tRNA editing enzyme that deacylates mischarged D-aminoacyl-tRNAs. Also deacylates mischarged glycyl-tRNA(Ala), protecting cells against glycine mischarging by AlaRS. Acts via tRNA-based rather than protein-based catalysis; rejects L-amino acids rather than detecting D-amino acids in the active site. By recycling D-aminoacyl-tRNA to D-amino acids and free tRNA molecules, this enzyme counteracts the toxicity associated with the formation of D-aminoacyl-tRNA entities in vivo and helps enforce protein L-homochirality. In Pseudoalteromonas translucida (strain TAC 125), this protein is D-aminoacyl-tRNA deacylase.